A 155-amino-acid polypeptide reads, in one-letter code: Ribosome maturation factor RimP (155 aa).

The protein belongs to the RimP family.

It is found in the cytoplasm. In terms of biological role, required for maturation of 30S ribosomal subunits. The polypeptide is Ribosome maturation factor RimP (Listeria monocytogenes serotype 4b (strain CLIP80459)).